The primary structure comprises 92 residues: Small ribosomal subunit protein uS19 (92 aa).

This sequence belongs to the universal ribosomal protein uS19 family.

In terms of biological role, protein S19 forms a complex with S13 that binds strongly to the 16S ribosomal RNA. In Picosynechococcus sp. (strain ATCC 27264 / PCC 7002 / PR-6) (Agmenellum quadruplicatum), this protein is Small ribosomal subunit protein uS19.